Reading from the N-terminus, the 540-residue chain is Solute carrier family 22 member 7 (540 aa).

12 helical membrane-spanning segments follow: residues 21-41 (LVLLALPRFLLPMHFLLPIFM), 144-164 (VTSTCFFIGVLLGAVVYGYLS), 172-192 (LLLVAYVSTLALGLMSAASVN), 202-222 (LTGSALAGFTIIVLPLELEWL), 232-252 (VISTTFWTGGVLLLTLVGYLI), 257-277 (WLLLAATLPCVPGIISIWWVP), 344-364 (VSLCCMMMWFGVNFSYYGLTL), 378-398 (LLFGAVEVPSKITVFFLVRLV), 402-422 (LTEAGMLLATALTFGISLLVS), 429-449 (ITALVVIGKAFSEAAFTTAYL), 462-484 (TGMGFTALIGRLGASLAPLVVLL), and 488-510 (WLLLPKLAYGGISFLAACTVLLL).

This sequence belongs to the major facilitator (TC 2.A.1) superfamily. Organic cation transporter (TC 2.A.1.19) family. As to expression, abundant expression in male and female kidney. In kidney, expressed at the brush border of the proximal tubule S3 segment (S3) in the outer stripe and medullary rays. In kidney, expression is higher in female than male. Also expressed in female liver.

It is found in the basolateral cell membrane. The protein localises to the apical cell membrane. Its subcellular location is the cell membrane. It catalyses the reaction orotate(out) + L-glutamate(in) = orotate(in) + L-glutamate(out). It carries out the reaction 3',5'-cyclic GMP(in) = 3',5'-cyclic GMP(out). The catalysed reaction is GMP(in) = GMP(out). The enzyme catalyses 2'-deoxyguanosine(in) = 2'-deoxyguanosine(out). It catalyses the reaction GDP(in) = GDP(out). It carries out the reaction guanosine(in) = guanosine(out). The catalysed reaction is GTP(in) = GTP(out). The enzyme catalyses 3',5'-cyclic AMP(in) = 3',5'-cyclic AMP(out). It catalyses the reaction creatinine(in) = creatinine(out). It carries out the reaction prostaglandin E2(out) = prostaglandin E2(in). The catalysed reaction is 2-oxoglutarate(in) = 2-oxoglutarate(out). The enzyme catalyses glutarate(in) = glutarate(out). It catalyses the reaction urate(out) = urate(in). It carries out the reaction estrone 3-sulfate(out) = estrone 3-sulfate(in). In terms of biological role, functions as a Na(+)-independent bidirectional multispecific transporter. Contributes to the renal and hepatic elimination of endogenous organic compounds from the systemic circulation into the urine and bile, respectively. Capable of transporting a wide range of purine and pyrimidine nucleobases, nucleosides, and nucleotides with cGMP, 2'deoxyguanosine and GMP being the preferred substrates. Functions as a pH- and chloride-independent cGMP bidirectional facilitative transporter that can regulate both intracellular and extracellular levels of cGMP and may be involved in cGMP signaling pathways. Mediates orotate/glutamate bidirectional exchange and most likely display a physiological role in hepatic release of glutamate into the blood. Involved in renal secretion and possible reabsorption of creatinine. Able to uptake prostaglandin E2 (PGE2) and may contribute to PGE2 renal excretion. Also transports alpha-ketoglutarate and urate. Unlike human hortolog, able to transport glutarate. Apart from the orotate/glutamate exchange, the counterions for the uptake of other SLC22A7/OAT2 substrates remain to be identified. The sequence is that of Solute carrier family 22 member 7 from Mus musculus (Mouse).